Reading from the N-terminus, the 281-residue chain is N-acetylmuramic acid 6-phosphate etherase (281 aa).

The SIS domain occupies 63 to 226 (IVPRMKQGGR…TTSVMIQLGR (164 aa)). Glu91 functions as the Proton donor in the catalytic mechanism. Glu122 is an active-site residue.

Belongs to the GCKR-like family. MurNAc-6-P etherase subfamily. Homodimer.

The enzyme catalyses N-acetyl-D-muramate 6-phosphate + H2O = N-acetyl-D-glucosamine 6-phosphate + (R)-lactate. It participates in amino-sugar metabolism; N-acetylmuramate degradation. Specifically catalyzes the cleavage of the D-lactyl ether substituent of MurNAc 6-phosphate, producing GlcNAc 6-phosphate and D-lactate. The chain is N-acetylmuramic acid 6-phosphate etherase from Bacteroides fragilis (strain ATCC 25285 / DSM 2151 / CCUG 4856 / JCM 11019 / LMG 10263 / NCTC 9343 / Onslow / VPI 2553 / EN-2).